A 369-amino-acid chain; its full sequence is MHGESPIKRRESRKIWVGNVPVGGDAPIAVQSMTNTDTNDVAATVAQIQRLVDAGVDIVRVSVPDMDAAEAFGKIKQLVSVPLVADIHFDYKIALRVAELGVDCLRINPGNIGREDRVRAVVDAARDRGIPIRIGVNAGSLEKDLQKKYGEPTPAALVESALRHVEHLDRLDFQDFKVSVKASDVFMAVEAYRLLAKQIVQPLHLGITEAGGLRSGTVKSAVGLGMLLAEGIGDTIRISLAADPVEEVKVGYDILKSLHLRSRGINFIACPSCSRQNFDVVKTMNELEGRLEDLLVPLDVAVIGCVVNGPGEAKEAHVGLTGGTPNLIYIDGKPAQKLTNDNLVDELEKLIRQKAAEKVEADAALIVRG.

Residues Cys-270, Cys-273, Cys-305, and Glu-312 each coordinate [4Fe-4S] cluster.

The protein belongs to the IspG family. [4Fe-4S] cluster serves as cofactor.

The catalysed reaction is (2E)-4-hydroxy-3-methylbut-2-enyl diphosphate + oxidized [flavodoxin] + H2O + 2 H(+) = 2-C-methyl-D-erythritol 2,4-cyclic diphosphate + reduced [flavodoxin]. It functions in the pathway isoprenoid biosynthesis; isopentenyl diphosphate biosynthesis via DXP pathway; isopentenyl diphosphate from 1-deoxy-D-xylulose 5-phosphate: step 5/6. Functionally, converts 2C-methyl-D-erythritol 2,4-cyclodiphosphate (ME-2,4cPP) into 1-hydroxy-2-methyl-2-(E)-butenyl 4-diphosphate. The sequence is that of 4-hydroxy-3-methylbut-2-en-1-yl diphosphate synthase (flavodoxin) from Pseudomonas putida (strain GB-1).